Reading from the N-terminus, the 642-residue chain is Protein INCREASED PETAL GROWTH ANISOTROPY 1 (642 aa).

Positions 1–60 (MVAGKVRVTMGFHKSPSTKKTKDMPSPLPLPPPPPPPLKPPSSGSATTKPPINPSKPGFT) are disordered. Residues 26–40 (SPLPLPPPPPPPLKP) show a composition bias toward pro residues. Positions 80-183 (AASHNGVVSE…EAEIVELRKL (104 aa)) form a coiled coil. Residues 223–351 (NLPEPITNQE…PPKSLSIASA (129 aa)) form a disordered region. Over residues 247–256 (DIYRKDEIES) the composition is skewed to basic and acidic residues. Positions 258 to 277 (SRSSNSEELTESSSLSTVRS) are enriched in low complexity. Residues 302 to 344 (DPPPQKSIPPPPPPPPPPLLQQPPPPPSVSKAPPPPPPPPPPK) are compositionally biased toward pro residues.

Belongs to the IPGA1 family. Associates to cortical microtubules via its N-terminal region. Interacts with ANGUSTIFOLIA (AN) on microtubule upon mechanical stress to regulate microtubule organization. Binds to the microtubule-severing enzyme KATANIN (KTN1). Expressed ubiquitously at all development stages, with highest in developing petals. During mechanical stress, accumulates in granules on microtubules.

The protein localises to the cytoplasm. It localises to the cytoskeleton. It is found in the cytosol. The protein resides in the cell membrane. Functionally, microtubule-associated protein involved in the regulation of anisotropic petal and cotyledons growth and shape by affecting cortical microtubule organization. Prevents cortical microtubules organization into parallel arrays oriented perpendicular to the axis of cell elongation thus limiting anisotropic cell growth in the late phases of petal development. Cooperatively with ANGUSTIFOLIA (AN), negatively regulates cortical microtubules (CMTs) organization in response to mechanical stress and modulates pavement cells morphogenesis leading to puzzle shape, probably in an AAA1/KTN1-dependent manner. The chain is Protein INCREASED PETAL GROWTH ANISOTROPY 1 from Arabidopsis thaliana (Mouse-ear cress).